A 946-amino-acid chain; its full sequence is Protein translocase subunit SecA (946 aa).

Residues Gln87, 105-109 (GEGKT), and Asp524 contribute to the ATP site. The tract at residues 905-926 (APASDAAQRDPKNPASWGKIGR) is disordered. The Zn(2+) site is built by Cys930, Cys932, Cys941, and His942.

This sequence belongs to the SecA family. Monomer and homodimer. Part of the essential Sec protein translocation apparatus which comprises SecA, SecYEG and auxiliary proteins SecDF-YajC and YidC. It depends on Zn(2+) as a cofactor.

Its subcellular location is the cell inner membrane. The protein resides in the cytoplasm. It carries out the reaction ATP + H2O + cellular proteinSide 1 = ADP + phosphate + cellular proteinSide 2.. In terms of biological role, part of the Sec protein translocase complex. Interacts with the SecYEG preprotein conducting channel. Has a central role in coupling the hydrolysis of ATP to the transfer of proteins into and across the cell membrane, serving both as a receptor for the preprotein-SecB complex and as an ATP-driven molecular motor driving the stepwise translocation of polypeptide chains across the membrane. This Bradyrhizobium diazoefficiens (strain JCM 10833 / BCRC 13528 / IAM 13628 / NBRC 14792 / USDA 110) protein is Protein translocase subunit SecA.